A 281-amino-acid polypeptide reads, in one-letter code: Complement C1q tumor necrosis factor-related protein 1 (281 aa).

Residues 1-25 form the signal peptide; that stretch reads MGSCAQGFMLGCCLLLAITWGPILS. The tract at residues 35 to 68 is disordered; that stretch reads QEWEETEELPSPLDPVTRPEETREKYSPRQGEDL. Basic and acidic residues predominate over residues 51–66; it reads TRPEETREKYSPRQGE. An N-linked (GlcNAc...) asparagine glycan is attached at N93. In terms of domain architecture, Collagen-like spans 99 to 140; it reads GEKGDRGDRGLQGKYGKIGSTGPRGHVGPKGQKGSIGAPGNH. Residues 107–136 are disordered; that stretch reads RGLQGKYGKIGSTGPRGHVGPKGQKGSIGA. A C1q domain is found at 141–281; it reads CKSQYAAFSV…GYLVKPASEP (141 aa).

It localises to the secreted. This is Complement C1q tumor necrosis factor-related protein 1 (C1qtnf1) from Mus musculus (Mouse).